The following is a 74-amino-acid chain: Protein sok (74 aa).

The segment at 26 to 45 (TQHGNKPPSRHEAESLKRRA) is disordered.

In Escherichia coli, this protein is Protein sok (sok).